A 150-amino-acid polypeptide reads, in one-letter code: UPF0756 membrane protein A1S_2121 (150 aa).

Helical transmembrane passes span 22–42 (SQNAAVTIAAGILIVIKITPL), 45–65 (FFPYIQAHGLNLGILILTIGV), 83–103 (FISFKSLVAIAIGLLVAWLGG), and 115–135 (VVAGLLIGTVAGVALLRGVPV).

The protein belongs to the UPF0756 family.

It is found in the cell membrane. This Acinetobacter baumannii (strain ATCC 17978 / DSM 105126 / CIP 53.77 / LMG 1025 / NCDC KC755 / 5377) protein is UPF0756 membrane protein A1S_2121.